A 778-amino-acid chain; its full sequence is DNA topoisomerase 1 (778 aa).

A disordered region spans residues 1–141 (MNSSDEEDIA…ETPEEDQGYK (141 aa)). Low complexity predominate over residues 17–26 (KSSSITSAST). 2 stretches are compositionally biased toward basic and acidic residues: residues 71-83 (VKTETKVKKEPKS) and 100-121 (EKTTVKKESKATSTKVKEESKT). Residues 122–131 (QSDSQASVKS) are compositionally biased toward polar residues. Interaction with DNA stretches follow at residues 367-368 (KY), 430-435 (RAGGEK), and 522-524 (TAK). In terms of domain architecture, Topo IB-type catalytic spans 374–778 (NSSVKGQSDF…IESADENWRF (405 aa)). The active-site O-(3'-phospho-DNA)-tyrosine intermediate is Tyr736.

Belongs to the type IB topoisomerase family.

The enzyme catalyses ATP-independent breakage of single-stranded DNA, followed by passage and rejoining.. Functionally, releases the supercoiling and torsional tension of DNA introduced during the DNA replication and transcription by transiently cleaving and rejoining one strand of the DNA duplex. Introduces a single-strand break via transesterification at a target site in duplex DNA. The scissile phosphodiester is attacked by the catalytic tyrosine of the enzyme, resulting in the formation of a DNA-(3'-phosphotyrosyl)-enzyme intermediate and the expulsion of a 5'-OH DNA strand. The free DNA strand then rotates around the intact phosphodiester bond on the opposing strand, thus removing DNA supercoils. Finally, in the religation step, the DNA 5'-OH attacks the covalent intermediate to expel the active-site tyrosine and restore the DNA phosphodiester backbone. This Candida albicans (Yeast) protein is DNA topoisomerase 1 (TOP1).